A 435-amino-acid polypeptide reads, in one-letter code: Homoserine dehydrogenase (435 aa).

Residues Thr13, Val14, and Lys104 each contribute to the NADPH site. Val14 lines the NAD(+) pocket. Residues Val14 and Lys104 each contribute to the NADP(+) site. 4 residues coordinate Na(+): Glu128, Val131, Gly133, and Ile135. NADP(+) contacts are provided by Gly186 and Glu189. The L-homoserine site is built by Glu189 and Asp200. Lys204 serves as the catalytic Proton donor. Gly301 is an NADPH binding site. Gly301 contributes to the NAD(+) binding site. Residue Gly301 participates in NADP(+) binding. The ACT domain maps to 354–429 (YLRVQAKDEP…CVEKPITMIR (76 aa)).

It belongs to the homoserine dehydrogenase family. As to quaternary structure, homotetramer. A metal cation is required as a cofactor.

It catalyses the reaction L-homoserine + NAD(+) = L-aspartate 4-semialdehyde + NADH + H(+). It functions in the pathway amino-acid biosynthesis; L-methionine biosynthesis via de novo pathway; L-homoserine from L-aspartate: step 3/3. It participates in amino-acid biosynthesis; L-threonine biosynthesis; L-threonine from L-aspartate: step 3/5. Neither NaCl nor KCl increase the activity. L-threonine and L-serine do not markedly inhibit the oxidation activity. Functionally, catalyzes the conversion of L-aspartate-beta-semialdehyde (L-Asa) to L-homoserine (L-Hse), the third step in the biosynthesis of threonine and methionine from aspartate. Is highly specific for NAD(+), and displays an approximate 479-fold (kcat/Km) preference for NAD(+) over NADP(+). This Neisseria gonorrhoeae (strain ATCC 700825 / FA 1090) protein is Homoserine dehydrogenase.